The chain runs to 166 residues: Putative transcriptional regulatory protein for hcr operon (166 aa).

Residues 1 to 155 enclose the HTH marR-type domain; the sequence is MRKHRGKPAN…LIGLLKRLYR (155 aa).

In terms of biological role, may be involved in the regulation of genes for 4-hydroxybenzoyl-CoA reductase. The sequence is that of Putative transcriptional regulatory protein for hcr operon from Thauera aromatica.